An 87-amino-acid chain; its full sequence is Acylphosphatase (87 aa).

The region spanning 2–87 (RLTALVSGHV…ETGLREFHIY (86 aa)) is the Acylphosphatase-like domain. Residues R17 and N35 contribute to the active site.

This sequence belongs to the acylphosphatase family.

It carries out the reaction an acyl phosphate + H2O = a carboxylate + phosphate + H(+). This is Acylphosphatase (acyP) from Deinococcus radiodurans (strain ATCC 13939 / DSM 20539 / JCM 16871 / CCUG 27074 / LMG 4051 / NBRC 15346 / NCIMB 9279 / VKM B-1422 / R1).